The sequence spans 107 residues: Large ribosomal subunit protein P2-A (107 aa).

The tract at residues 85–107 (GAAAPAAAAEEEEDDDMGFGLFD) is disordered.

It belongs to the eukaryotic ribosomal protein P1/P2 family. As to quaternary structure, P1 and P2 exist as dimers at the large ribosomal subunit. In terms of processing, phosphorylated.

In terms of biological role, plays an important role in the elongation step of protein synthesis. The polypeptide is Large ribosomal subunit protein P2-A (Trypanosoma cruzi).